The chain runs to 443 residues: Probable glycine dehydrogenase (decarboxylating) subunit 1 (443 aa).

This sequence belongs to the GcvP family. N-terminal subunit subfamily. In terms of assembly, the glycine cleavage system is composed of four proteins: P, T, L and H. In this organism, the P 'protein' is a heterodimer of two subunits.

It carries out the reaction N(6)-[(R)-lipoyl]-L-lysyl-[glycine-cleavage complex H protein] + glycine + H(+) = N(6)-[(R)-S(8)-aminomethyldihydrolipoyl]-L-lysyl-[glycine-cleavage complex H protein] + CO2. In terms of biological role, the glycine cleavage system catalyzes the degradation of glycine. The P protein binds the alpha-amino group of glycine through its pyridoxal phosphate cofactor; CO(2) is released and the remaining methylamine moiety is then transferred to the lipoamide cofactor of the H protein. This is Probable glycine dehydrogenase (decarboxylating) subunit 1 from Koribacter versatilis (strain Ellin345).